A 471-amino-acid polypeptide reads, in one-letter code: Sestrin-2 (471 aa).

Position 1 is an N-acetylmethionine (Met-1). The tract at residues Gly-57–Thr-230 is N-terminal domain; mediates the alkylhydroperoxide reductase activity. Cys-116 acts as the Cysteine sulfenic acid (-SOH) intermediate in catalysis. Residue Lys-166 forms a Glycyl lysine isopeptide (Lys-Gly) (interchain with G-Cter in ubiquitin) linkage. The tract at residues Asp-212–Gly-241 is disordered. A Phosphoserine modification is found at Ser-240. The tract at residues Ala-299–Thr-471 is C-terminal domain; mediates TORC1 regulation. L-leucine-binding positions include Thr-365–Thr-368, Thr-377, and Glu-442.

Belongs to the sestrin family. Interacts with the GATOR2 complex which is composed of MIOS, SEC13, SEH1L, WDR24 and WDR59; the interaction is negatively regulated by leucine. Conveys leucine availability via direct interaction with SEH1L and WDR24 components of the GATOR2 complex. Interacts with RRAGA, RRAGB, RRAGC and RRAGD; may function as a guanine nucleotide dissociation inhibitor for RRAGs and regulate them. May interact with the TORC2 complex. Interacts with KEAP1, RBX1, SQSTM and ULK1; to regulate the degradation of KEAP1. May also associate with the complex composed of TSC1, TSC2 and the AMP-responsive protein kinase/AMPK to regulate TORC1 signaling. May interact with PRDX1. Phosphorylated by ULK1 at multiple sites. Post-translationally, ubiquitinated at Lys-166 by RNF167 via 'Lys-63'-linked polyubiquitination in response to leucine deprivation: ubiquitination promotes SESN2-interaction with the GATOR2 complex, leading to inhibit the TORC1 signaling pathway. Deubiquitinated at Lys-166 by STAMBPL1, promoting the TORC1 signaling pathway. Ubiquitinated by RNF186; ubiquitination mediates proteasomal degradation.

Its subcellular location is the cytoplasm. The enzyme catalyses a hydroperoxide + L-cysteinyl-[protein] = S-hydroxy-L-cysteinyl-[protein] + an alcohol. Functionally, functions as an intracellular leucine sensor that negatively regulates the mTORC1 signaling pathway through the GATOR complex. In absence of leucine, binds the GATOR subcomplex GATOR2 and prevents mTORC1 signaling. Binding of leucine to SESN2 disrupts its interaction with GATOR2 thereby activating the TORC1 signaling pathway. This stress-inducible metabolic regulator also plays a role in protection against oxidative and genotoxic stresses. May negatively regulate protein translation in response to endoplasmic reticulum stress, via mTORC1. May positively regulate the transcription by NFE2L2 of genes involved in the response to oxidative stress by facilitating the SQSTM1-mediated autophagic degradation of KEAP1. May also mediate TP53 inhibition of TORC1 signaling upon genotoxic stress. Moreover, may prevent the accumulation of reactive oxygen species (ROS) through the alkylhydroperoxide reductase activity born by the N-terminal domain of the protein. Was originally reported to contribute to oxidative stress resistance by reducing PRDX1. However, this could not be confirmed. The sequence is that of Sestrin-2 from Bos taurus (Bovine).